Reading from the N-terminus, the 206-residue chain is Large ribosomal subunit protein bL25 (206 aa).

It belongs to the bacterial ribosomal protein bL25 family. CTC subfamily. Part of the 50S ribosomal subunit; part of the 5S rRNA/L5/L18/L25 subcomplex. Contacts the 5S rRNA. Binds to the 5S rRNA independently of L5 and L18.

Functionally, this is one of the proteins that binds to the 5S RNA in the ribosome where it forms part of the central protuberance. In Ralstonia nicotianae (strain ATCC BAA-1114 / GMI1000) (Ralstonia solanacearum), this protein is Large ribosomal subunit protein bL25.